A 132-amino-acid chain; its full sequence is Ribosome-binding factor A (132 aa).

It belongs to the RbfA family. As to quaternary structure, monomer. Binds 30S ribosomal subunits, but not 50S ribosomal subunits or 70S ribosomes.

The protein localises to the cytoplasm. One of several proteins that assist in the late maturation steps of the functional core of the 30S ribosomal subunit. Associates with free 30S ribosomal subunits (but not with 30S subunits that are part of 70S ribosomes or polysomes). Required for efficient processing of 16S rRNA. May interact with the 5'-terminal helix region of 16S rRNA. The protein is Ribosome-binding factor A of Teredinibacter turnerae (strain ATCC 39867 / T7901).